The chain runs to 141 residues: Large ribosomal subunit protein uL11 (141 aa).

The protein belongs to the universal ribosomal protein uL11 family. As to quaternary structure, part of the ribosomal stalk of the 50S ribosomal subunit. Interacts with L10 and the large rRNA to form the base of the stalk. L10 forms an elongated spine to which L12 dimers bind in a sequential fashion forming a multimeric L10(L12)X complex. In terms of processing, one or more lysine residues are methylated.

Functionally, forms part of the ribosomal stalk which helps the ribosome interact with GTP-bound translation factors. This chain is Large ribosomal subunit protein uL11, found in Lactococcus lactis subsp. lactis (strain IL1403) (Streptococcus lactis).